A 417-amino-acid polypeptide reads, in one-letter code: Gamma-glutamyl phosphate reductase (417 aa).

It belongs to the gamma-glutamyl phosphate reductase family.

The protein localises to the cytoplasm. The catalysed reaction is L-glutamate 5-semialdehyde + phosphate + NADP(+) = L-glutamyl 5-phosphate + NADPH + H(+). Its pathway is amino-acid biosynthesis; L-proline biosynthesis; L-glutamate 5-semialdehyde from L-glutamate: step 2/2. Its function is as follows. Catalyzes the NADPH-dependent reduction of L-glutamate 5-phosphate into L-glutamate 5-semialdehyde and phosphate. The product spontaneously undergoes cyclization to form 1-pyrroline-5-carboxylate. This is Gamma-glutamyl phosphate reductase from Escherichia coli O45:K1 (strain S88 / ExPEC).